The following is a 1537-amino-acid chain: Flocculation protein FLO1 (1537 aa).

A signal peptide spans 1–24 (MTMPHRYMFLAVFTLLALTSVASG). Residues 74–249 (GGQTDISIDY…GTTVSDDFEG (176 aa)) form the PA14 domain. Asparagine 135 and asparagine 187 each carry an N-linked (GlcNAc...) asparagine glycan. The sugar recognition stretch occupies residues 197 to 240 (GGSLPPNIEGTVYMYAGYYYPMKVVYSNAVSWGTLPISVTLPDG). A glycan (N-linked (GlcNAc...) asparagine) is linked at asparagine 262. Repeat copies occupy residues 278–322 (TTTE…STII), 323–367 (TTTE…TTAI), 368–412 (TTTE…TTAM), 413–457 (TTTQ…TTAM), 458–502 (TTTQ…TTAM), 503–547 (TTTQ…TTAM), 548–592 (TTPQ…TTAI), 593–637 (TTTE…TTAI), 638–682 (TTTQ…TTAM), 683–727 (TTTQ…TTAM), 728–772 (TTTQ…GLIS), 773–817 (TTTE…GLVT), 818–862 (TTTE…GLIS), 863–907 (TTTE…GLIS), 908–952 (TTTE…GLIS), 953–997 (TTTE…GLIS), 998–1042 (TTTE…GLVT), and 1043–1087 (TTTE…ISSS). Residues 278 to 1087 (TTTEPWTGTF…KTPTTAISSS (810 aa)) form an 18 X 45 AA approximate tandem repeats, Thr-rich region. N-linked (GlcNAc...) asparagine glycans are attached at residues asparagine 329, asparagine 374, asparagine 419, asparagine 464, asparagine 509, asparagine 554, asparagine 599, asparagine 644, asparagine 689, and asparagine 734. Disordered regions lie at residues 770–799 (LISTTTEPWTGTFTSTSTEMTTVTGTNGQP) and 860–889 (LISTTTEPWTGTFTSTSTEMTTITGTNGQP). The span at 773 to 795 (TTTEPWTGTFTSTSTEMTTVTGT) shows a compositional bias: low complexity. Over residues 863-885 (TTTEPWTGTFTSTSTEMTTITGT) the composition is skewed to low complexity. The segment at 995-1024 (LISTTTEPWTGTFTSTSTEMTTVTGTNGQP) is disordered. The segment covering 998–1020 (TTTEPWTGTFTSTSTEMTTVTGT) has biased composition (low complexity). Asparagine 1114 is a glycosylation site (N-linked (GlcNAc...) asparagine). 2 consecutive repeat copies span residues 1118-1137 (VISSSVISSSVTSSLFTSSP) and 1138-1157 (VISSSVISSSTTTSTSIFSE). A 2 X 20 AA approximate tandem repeats, Ser/Thr-rich region spans residues 1118–1157 (VISSSVISSSVTSSLFTSSPVISSSVISSSTTTSTSIFSE). Over residues 1161–1220 (SSVIPTSSSTSGSSESETSSAGSVSSSSFISSESSKSPTYSSSSLPLVTSATTSQETASS) the composition is skewed to low complexity. A disordered region spans residues 1161–1232 (SSVIPTSSST…PATTTKTSEQ (72 aa)). A compositionally biased stretch (polar residues) spans 1222-1232 (PPATTTKTSEQ). A run of 6 repeats spans residues 1226–1276 (TTKT…CPIS), 1291–1341 (TTET…CPIS), 1342–1392 (TTES…RPQT), 1408–1416 (ETTTNTLAA), 1417–1425 (ETTTNTVAA), and 1426–1434 (ETITNTGAA). The interval 1226 to 1392 (TTKTSEQTTL…TVYPTWRPQT (167 aa)) is 3 X 51 AA approximate repeats, Ser/Thr-rich. Residues 1392-1404 (TANEESVSSKMNS) show a composition bias toward polar residues. Residues 1392–1414 (TANEESVSSKMNSATGETTTNTL) form a disordered region. The segment covering 1405–1414 (ATGETTTNTL) has biased composition (low complexity). Positions 1408–1434 (ETTTNTLAAETTTNTVAAETITNTGAA) are 3 X 9 AA approximate tandem repeats, Thr-rich. A disordered region spans residues 1468-1497 (VSVSETGNTKSLTSSGLSTMSQQPRSTPAS). Residues 1472-1497 (ETGNTKSLTSSGLSTMSQQPRSTPAS) show a composition bias toward polar residues. The GPI-anchor amidated glycine moiety is linked to residue glycine 1514. Positions 1515–1537 (SANSLLAGSGLSVFIASLLLAII) are cleaved as a propeptide — removed in mature form.

This sequence belongs to the flocculin family. In terms of processing, extensively N- and O-glycosylated. Post-translationally, the GPI-anchor is attached to the protein in the endoplasmic reticulum and serves to target the protein to the cell surface. There, the glucosamine-inositol phospholipid moiety is cleaved off and the GPI-modified mannoprotein is covalently attached via its lipidless GPI glycan remnant to the 1,6-beta-glucan of the outer cell wall layer.

Its subcellular location is the cell membrane. The protein resides in the secreted. The protein localises to the cell wall. Functionally, cell wall protein that participates directly in adhesive cell-cell interactions during yeast flocculation, a reversible, asexual and Ca(2+)-dependent process in which cells adhere to form aggregates (flocs) consisting of thousands of cells. The lectin-like protein sticks out of the cell wall of flocculent cells and selectively binds mannose residues in the cell walls of adjacent cells. Activity is inhibited by mannose, but not by glucose, maltose, sucrose or galactose. Also involved in cell-substrate adhesion. The protein is Flocculation protein FLO1 (FLO1) of Saccharomyces cerevisiae (strain ATCC 204508 / S288c) (Baker's yeast).